The sequence spans 521 residues: Cytochrome P450 monooxygenase bet2 (521 aa).

Residues serine 23–valine 43 traverse the membrane as a helical segment. Asparagine 188 carries an N-linked (GlcNAc...) asparagine glycan. Cysteine 461 serves as a coordination point for heme.

This sequence belongs to the cytochrome P450 family. It depends on heme as a cofactor.

The protein localises to the membrane. The catalysed reaction is dehydroprobetaenone I + NADPH + O2 + H(+) = epoxybetaenone + NADP(+) + H2O. The enzyme catalyses dehydroprobetaenone I + 3 NADPH + 3 O2 + 3 H(+) = betaenone C + 3 NADP(+) + 3 H2O. It functions in the pathway mycotoxin biosynthesis. Functionally, cytochrome P450 monooxygenase; part of the gene cluster that mediates the biosynthesis of betaenones, phytotoxic polyketides involved in leaf spot disease in sugar beets. The first step of the pathway is the synthesis of dehydroprobetaenone I by the polyketide synthase bet1 and the enoyl reductase bet3 via condensation of one acetyl-CoA starter unit with 7 malonyl-CoA units and 5 methylations. The C-terminal reductase (R) domain of bet1 catalyzes the reductive release of the polyketide chain. Because bet1 lacks a designated enoylreductase (ER) domain, the required activity is provided the enoyl reductase bet3. The short-chain dehydrogenase/reductase bet4 then catalyzes reduction of dehydroprobetaenone I to probetaenone I. The cytochrome P450 monooxygenase bet2 catalyzes successive epoxidation, oxidation (resulting from epoxide opening) and hydroxylation to install a tertiary alcohol in the decaline ring to yield betaenone C from dehydroprobetaenone I and betaenone B from probetaenone I. The FAD-linked oxidoreductase (orf1) is probably responsible for the conversion of betaenone C to betaenone A via an intramolecular aldol reaction between C-1 and C-17 to form the bridged tricyclic system in betaenone A. This is Cytochrome P450 monooxygenase bet2 from Neocamarosporium betae (Beet black rot fungus).